The primary structure comprises 232 residues: Sugar fermentation stimulation protein homolog (232 aa).

This sequence belongs to the SfsA family.

The protein is Sugar fermentation stimulation protein homolog of Pyrobaculum arsenaticum (strain DSM 13514 / JCM 11321 / PZ6).